Reading from the N-terminus, the 186-residue chain is Elongation factor P (186 aa).

Belongs to the elongation factor P family.

It localises to the cytoplasm. Its pathway is protein biosynthesis; polypeptide chain elongation. Its function is as follows. Involved in peptide bond synthesis. Stimulates efficient translation and peptide-bond synthesis on native or reconstituted 70S ribosomes in vitro. Probably functions indirectly by altering the affinity of the ribosome for aminoacyl-tRNA, thus increasing their reactivity as acceptors for peptidyl transferase. The polypeptide is Elongation factor P (Crocosphaera subtropica (strain ATCC 51142 / BH68) (Cyanothece sp. (strain ATCC 51142))).